A 176-amino-acid polypeptide reads, in one-letter code: ATP synthase subunit delta (176 aa).

The protein belongs to the ATPase delta chain family. In terms of assembly, F-type ATPases have 2 components, F(1) - the catalytic core - and F(0) - the membrane proton channel. F(1) has five subunits: alpha(3), beta(3), gamma(1), delta(1), epsilon(1). F(0) has three main subunits: a(1), b(2) and c(10-14). The alpha and beta chains form an alternating ring which encloses part of the gamma chain. F(1) is attached to F(0) by a central stalk formed by the gamma and epsilon chains, while a peripheral stalk is formed by the delta and b chains.

The protein localises to the cell inner membrane. Its function is as follows. F(1)F(0) ATP synthase produces ATP from ADP in the presence of a proton or sodium gradient. F-type ATPases consist of two structural domains, F(1) containing the extramembraneous catalytic core and F(0) containing the membrane proton channel, linked together by a central stalk and a peripheral stalk. During catalysis, ATP synthesis in the catalytic domain of F(1) is coupled via a rotary mechanism of the central stalk subunits to proton translocation. This protein is part of the stalk that links CF(0) to CF(1). It either transmits conformational changes from CF(0) to CF(1) or is implicated in proton conduction. The protein is ATP synthase subunit delta of Wolinella succinogenes (strain ATCC 29543 / DSM 1740 / CCUG 13145 / JCM 31913 / LMG 7466 / NCTC 11488 / FDC 602W) (Vibrio succinogenes).